Here is a 677-residue protein sequence, read N- to C-terminus: Beta-galactosidase BgaA (677 aa).

R112 is a substrate binding site. Residue C116 participates in Zn(2+) binding. Residue N150 coordinates substrate. E151 acts as the Proton donor in catalysis. Zn(2+)-binding residues include C156, C158, and C161. The active-site Nucleophile is E309. Residues W317 and 357-360 (EKYH) contribute to the substrate site.

The protein belongs to the glycosyl hydrolase 42 family. As to quaternary structure, dimer.

The enzyme catalyses Hydrolysis of terminal non-reducing beta-D-galactose residues in beta-D-galactosides.. With respect to regulation, no activity is lost during treatment with 20 or 100 mM EDTA in Z buffer for 3 hours at 0 degrees Celsius, nor is activity greatly stimulated by the addition of cations. Inhibited by 1 mM zinc and 1 mM copper, the levels of activity decrease to 10% of the untreated control. Nickel, cobalt and manganese at concentrations of 10 mM decrease enzyme activity to either 40% (for nickel and cobalt) or 60% (for manganese) of the activity in untreated controls. No change in enzyme activity in the presence of calcium and magnesium at concentrations up to 50 mM. EDTA-treated enzyme exhibits a slight increase in relative specific activity when it is assayed in the presence of 50 mM NaCl or 50 mM KCl, it does not exhibit enhanced activity at concentrations greater than 250 mM. Maintains between 20 and 40% of activity in the presence of 4 M NaCl or 4 M KCl, and it is more active in the presence of KCl than in the presence of NaCl. Retains 50% of activity in the presence of 3 M KCl or 2.5 M NaCl. Its function is as follows. Hydrolyzes o-nitrophenyl-beta-D-galactopyranoside (ONPG), p-nitrophenyl-beta-D-galactopyranoside (PNPG), 5-bromo-4-chloro-3-indoyl-beta-D-galactosde (X-gal), o-nitrophenyl-beta-D-fucopyranoside (ONPF) and p-nitrophenyl-beta-D-fucopyranoside (PNPF) with greatest activity towards ONPG and PNPG and low levels of activity with ONPF and PNPF. Detectable, but very low levels of activity towards p-nitrophenyl-beta-lactose (PNPL), p-nitrophenyl-beta-cellobiose (PNPC), p-nitrophenyl-alpha-galactopyranoside (PNP-alpha-G), and p-nitrophenyl-beta-xylopyranoside (PNPX). The polypeptide is Beta-galactosidase BgaA (Planococcus sp. (strain 'SOS Orange')).